A 609-amino-acid polypeptide reads, in one-letter code: Dihydroxy-acid dehydratase (609 aa).

Asp81 is a Mg(2+) binding site. Cys122 lines the [2Fe-2S] cluster pocket. Mg(2+) contacts are provided by Asp123 and Lys124. The residue at position 124 (Lys124) is an N6-carboxylysine. A [2Fe-2S] cluster-binding site is contributed by Cys195. Glu491 contacts Mg(2+). The active-site Proton acceptor is the Ser517.

This sequence belongs to the IlvD/Edd family. In terms of assembly, homodimer. The cofactor is [2Fe-2S] cluster. Mg(2+) is required as a cofactor.

It catalyses the reaction (2R)-2,3-dihydroxy-3-methylbutanoate = 3-methyl-2-oxobutanoate + H2O. The enzyme catalyses (2R,3R)-2,3-dihydroxy-3-methylpentanoate = (S)-3-methyl-2-oxopentanoate + H2O. It functions in the pathway amino-acid biosynthesis; L-isoleucine biosynthesis; L-isoleucine from 2-oxobutanoate: step 3/4. The protein operates within amino-acid biosynthesis; L-valine biosynthesis; L-valine from pyruvate: step 3/4. In terms of biological role, functions in the biosynthesis of branched-chain amino acids. Catalyzes the dehydration of (2R,3R)-2,3-dihydroxy-3-methylpentanoate (2,3-dihydroxy-3-methylvalerate) into 2-oxo-3-methylpentanoate (2-oxo-3-methylvalerate) and of (2R)-2,3-dihydroxy-3-methylbutanoate (2,3-dihydroxyisovalerate) into 2-oxo-3-methylbutanoate (2-oxoisovalerate), the penultimate precursor to L-isoleucine and L-valine, respectively. This Acinetobacter baumannii (strain ACICU) protein is Dihydroxy-acid dehydratase.